The primary structure comprises 449 residues: Heterogeneous nuclear ribonucleoprotein H2 (449 aa).

An N-acetylmethionine modification is found at Met1. Met2 is modified (N-acetylmethionine; in Heterogeneous nuclear ribonucleoprotein H2, N-terminally processed). The 80-residue stretch at 11–90 folds into the RRM 1 domain; sequence FVVKVRGLPW…RYVEVFKSNS (80 aa). Ser23 is subject to Phosphoserine. Residue Lys35 forms a Glycyl lysine isopeptide (Lys-Gly) (interchain with G-Cter in SUMO2) linkage. Phosphoserine occurs at positions 54 and 63. Lys87 is covalently cross-linked (Glycyl lysine isopeptide (Lys-Gly) (interchain with G-Cter in SUMO2)). Ser90 bears the Phosphoserine mark. A Glycyl lysine isopeptide (Lys-Gly) (interchain with G-Cter in SUMO2) cross-link involves residue Lys98. The region spanning 111–188 is the RRM 2 domain; sequence GFVRLRGLPF…RYIEIFKSSR (78 aa). Arg233 carries the post-translational modification Dimethylated arginine; alternate. Arg233 carries the post-translational modification Omega-N-methylarginine; alternate. Residues 234 to 249 form a 1-1 repeat; the sequence is GAYGGGYGGYDDYGGY. A 2 X 16 AA Gly-rich approximate repeats region spans residues 234-433; sequence GAYGGGYGGY…YGGQSSMSGY (200 aa). Tyr246 bears the Phosphotyrosine mark. The 76-residue stretch at 289–364 folds into the RRM 3 domain; sequence HCVHMRGLPY…RYVELFLNST (76 aa). Ser310 carries the post-translational modification Phosphoserine. 3 consecutive repeat copies span residues 354–372, 374–392, and 418–433. Residues 354–392 form a 2 X 19 AA perfect repeats region; that stretch reads HRYVELFLNSTAGTSGGAYDHSYVELFLNSTAGASGGAY.

As to quaternary structure, component of a ribonucleoprotein complex containing mRNAs and RNA-binding proteins including DDX5, HNRNPH2 and SRSF1 as well as splicing regulator ARVCF. Interacts with TXNL4/DIM1.

The protein resides in the nucleus. It localises to the nucleoplasm. Its function is as follows. This protein is a component of the heterogeneous nuclear ribonucleoprotein (hnRNP) complexes which provide the substrate for the processing events that pre-mRNAs undergo before becoming functional, translatable mRNAs in the cytoplasm. Binds poly(RG). The protein is Heterogeneous nuclear ribonucleoprotein H2 (Hnrnph2) of Mus musculus (Mouse).